Consider the following 249-residue polypeptide: Cytokine-inducible SH2-containing protein (249 aa).

Residues 41 to 64 (AFPEEPAPTFAAPEPDGSAPQTRD) form a disordered region. The region spanning 84 to 165 (WYWGSITASE…PDVVSLIQHY (82 aa)) is the SH2 domain. Residues 200–248 (KLLRPLGRRDSIPSLQHLCRLRINRCTTEVERLPLPRRMGDYLKQYPFQ) enclose the SOCS box domain.

The protein operates within protein modification; protein ubiquitination. In terms of biological role, SOCS family proteins form part of a classical negative feedback system that regulates cytokine signal transduction. CIS is involved in the negative regulation of cytokines that signal through the JAK-STAT5 pathway such as erythropoietin, prolactin and interleukin 3 (IL3) receptor. Inhibits STAT5 trans-activation by suppressing its tyrosine phosphorylation. May be a substrate-recognition component of a SCF-like ECS (Elongin BC-CUL2/5-SOCS-box protein) E3 ubiquitin-protein ligase complex which mediates the ubiquitination and subsequent proteasomal degradation of target proteins. This chain is Cytokine-inducible SH2-containing protein (CISH), found in Gallus gallus (Chicken).